Consider the following 486-residue polypeptide: Protein hold'em (486 aa).

The segment at residues 166–285 (IITTNVNLLV…DCRLLLAFAA (120 aa)) is a DNA-binding region (OB).

It belongs to the MEIOB family. As to quaternary structure, interacts with mei-9 and Ercc1.

In terms of biological role, single-stranded DNA-binding protein required for meiosis. May be involved in the resolution of recombination intermediates into crossovers in the meiotic recombination pathway. This chain is Protein hold'em (hdm), found in Drosophila melanogaster (Fruit fly).